Reading from the N-terminus, the 449-residue chain is Adenosylhomocysteinase (449 aa).

S2 is modified (N-acetylserine). Residue K21 forms a Glycyl lysine isopeptide (Lys-Gly) (interchain with G-Cter in ubiquitin) linkage. Substrate contacts are provided by T58, D134, and E159. 160–162 is a binding site for NAD(+); it reads TTT. Substrate contacts are provided by K189 and D193. NAD(+) is bound by residues N194, 223–228, E246, 302–304, and N349; these read GYGDVG and IGH. T393 carries the phosphothreonine modification. A Glycyl lysine isopeptide (Lys-Gly) (interchain with G-Cter in ubiquitin) cross-link involves residue K413.

Belongs to the adenosylhomocysteinase family. NAD(+) serves as cofactor.

It catalyses the reaction S-adenosyl-L-homocysteine + H2O = L-homocysteine + adenosine. The protein operates within amino-acid biosynthesis; L-homocysteine biosynthesis; L-homocysteine from S-adenosyl-L-homocysteine: step 1/1. Functionally, adenosylhomocysteine is a competitive inhibitor of S-adenosyl-L-methionine-dependent methyl transferase reactions; therefore adenosylhomocysteinase may play a key role in the control of methylations via regulation of the intracellular concentration of adenosylhomocysteine. The protein is Adenosylhomocysteinase (SAH1) of Saccharomyces cerevisiae (strain ATCC 204508 / S288c) (Baker's yeast).